Consider the following 508-residue polypeptide: Gasdermin-C (508 aa).

Positions 1 to 257 (MPSMLERISK…VGYCAARSEG (257 aa)) are triggers pyroptosis.

It belongs to the gasdermin family. Homooligomer; homooligomeric ring-shaped pore complex containing 27-28 subunits when inserted in the membrane. In terms of processing, cleavage by CASP8 relieves autoinhibition by releasing the N-terminal moiety (Gasdermin-C, N-terminal) that initiates pyroptosis. The cleavage site is unclear. According to a publication, it takes place after Asp-240 in response to alpha-ketoglutarate. Another paper reports cleavage by CASP8 after Asp-365. Post-translationally, palmitoylated. In terms of tissue distribution, expressed mainly in trachea and spleen. In the esophagus, expressed in differentiating cells and probably in differentiated cells. Also detected in gastric epithelium.

Its subcellular location is the cytoplasm. The protein resides in the cytosol. It localises to the cell membrane. The full-length protein before cleavage is inactive: intramolecular interactions between N- and C-terminal domains mediate autoinhibition in the absence of activation signal. The intrinsic pyroptosis-inducing activity is carried by the released N-terminal moiety (Gasdermin-C, N-terminal) following cleavage by caspase CASP8. In terms of biological role, this form constitutes the precursor of the pore-forming protein: upon cleavage, the released N-terminal moiety (Gasdermin-C, N-terminal) binds to membranes and forms pores, triggering pyroptosis. Functionally, pore-forming protein that causes membrane permeabilization and pyroptosis. Produced by the cleavage of gasdermin-C by caspase CASP8 in response to death signals. After cleavage, moves to the plasma membrane where it strongly binds to membrane inner leaflet lipids. Homooligomerizes within the membrane and forms pores of 10-15 nanometers (nm) of inner diameter, triggering pyroptosis. The chain is Gasdermin-C from Homo sapiens (Human).